Here is a 165-residue protein sequence, read N- to C-terminus: UBA-like domain-containing protein 2-B (165 aa).

The disordered stretch occupies residues 119–165 (QQPVWLPPASPTAHLHHHHHHPQPVWPPNSQPTGGPQKAMAAMDGQR).

The protein belongs to the UBALD family.

The protein is UBA-like domain-containing protein 2-B (ubald2-b) of Xenopus laevis (African clawed frog).